A 375-amino-acid chain; its full sequence is MAQLCVALVAGEASGDILGSGLMRAIKARHPDVRFIGVGGPLMEAEGMSSYFPMERLAVMGLVEVLGRLRELLKRRKELIATLIDEKPDVFIGIDAPDFTLNIELKLRQAGIKTVHYVSPSVWAWRQKRVLKIREGCDLMLTLLPFEARFYEEQGVPVRFVGHPLADTIPLESDRGAARAELGLAEGPVIALMPGSRGGEVGRLGALFLDAAQRLRELVPGVRFVLPCANAARRAQVEQMLEGRDLPLTLLDGRSHQALAACDAVLIASGTATLEAMLYKRPMVVAYRLAPLTYWILKRMVKSPYVSLPNLLAQRMLVPELLQDAATSEALAQTLAPLVGDGSQQTDSFDQIHRTLRRDASNQAADAVLALLKDR.

This sequence belongs to the LpxB family.

It carries out the reaction a lipid X + a UDP-2-N,3-O-bis[(3R)-3-hydroxyacyl]-alpha-D-glucosamine = a lipid A disaccharide + UDP + H(+). The protein operates within bacterial outer membrane biogenesis; LPS lipid A biosynthesis. In terms of biological role, condensation of UDP-2,3-diacylglucosamine and 2,3-diacylglucosamine-1-phosphate to form lipid A disaccharide, a precursor of lipid A, a phosphorylated glycolipid that anchors the lipopolysaccharide to the outer membrane of the cell. This chain is Lipid-A-disaccharide synthase, found in Pseudomonas entomophila (strain L48).